A 113-amino-acid polypeptide reads, in one-letter code: U11-theraphotoxin-Hhn1a (113 aa).

Residues M1–A21 form the signal peptide. Residues D22–R74 constitute a propeptide that is removed on maturation. Disulfide bonds link C75–C90, C82–C95, and C89–C110.

The protein belongs to the neurotoxin 14 (magi-1) family. 01 (HNTX-16) subfamily. In terms of tissue distribution, expressed by the venom gland.

It localises to the secreted. Its function is as follows. Probable ion channel inhibitor. This is U11-theraphotoxin-Hhn1a from Cyriopagopus hainanus (Chinese bird spider).